The chain runs to 170 residues: MDSSQYMLKATLTQMCLCSRGVRNVHSEHPQQQDSSLTLWRPWLLGAGDRELDGQQRRSGEADGVPTNTGPKGALGFQHPVRLYMPKSKTSEYLQHMGRKVLASFPVQATIHFYNDDSDSEEEDEEEEMEFYNYYQNCAANGVDSSRGSSDNYSVQGGPKRNIGSHAGSA.

Residues 40–43 (WRPW) carry the WRPW motif motif. Positions 51–61 (ELDGQQRRSGE) are enriched in basic and acidic residues. Positions 51–78 (ELDGQQRRSGEADGVPTNTGPKGALGFQ) are disordered. Residues 79–114 (HPVRLYMPKSKTSEYLQHMGRKVLASFPVQATIHFY) are ripply homology domain. Residues 142 to 155 (GVDSSRGSSDNYSV) show a composition bias toward polar residues. A disordered region spans residues 142 to 170 (GVDSSRGSSDNYSVQGGPKRNIGSHAGSA).

It belongs to the ripply family. In terms of assembly, interacts with tbx1 and tle4/grg4. At neurula stage, expressed in the region close to the heart mesoderm. At the tailbud stage, expressed in the pharyngeal region.

Its subcellular location is the nucleus. Its function is as follows. Acts as a transcriptional corepressor. Negative regulator of the transcriptional activity of tbx1 that plays a key role in pharyngeal development. Plays a role in the formation of the anteroposterior (AP) axis during embryonic development; required to establish the posterolateral border of the pre-placodal ectoderm (PPE) acting downstream of the retinoic acid receptor (RAR) signaling. This chain is Protein ripply3 (ripply3), found in Xenopus laevis (African clawed frog).